The chain runs to 156 residues: Small ribosomal subunit protein uS7 (156 aa).

It belongs to the universal ribosomal protein uS7 family. Part of the 30S ribosomal subunit. Contacts proteins S9 and S11.

One of the primary rRNA binding proteins, it binds directly to 16S rRNA where it nucleates assembly of the head domain of the 30S subunit. Is located at the subunit interface close to the decoding center, probably blocks exit of the E-site tRNA. This Campylobacter fetus subsp. fetus (strain 82-40) protein is Small ribosomal subunit protein uS7.